Reading from the N-terminus, the 289-residue chain is S-methyl-5'-thioadenosine phosphorylase (289 aa).

Phosphate contacts are provided by residues serine 24, 66 to 67 (RH), and 99 to 100 (TA). Substrate is bound at residue methionine 202. Threonine 203 is a binding site for phosphate. Residue 226–228 (DYD) participates in substrate binding.

It belongs to the PNP/MTAP phosphorylase family. MTAP subfamily. As to quaternary structure, homotrimer.

It localises to the cytoplasm. It is found in the nucleus. It catalyses the reaction S-methyl-5'-thioadenosine + phosphate = 5-(methylsulfanyl)-alpha-D-ribose 1-phosphate + adenine. The protein operates within amino-acid biosynthesis; L-methionine biosynthesis via salvage pathway; S-methyl-5-thio-alpha-D-ribose 1-phosphate from S-methyl-5'-thioadenosine (phosphorylase route): step 1/1. Its function is as follows. Catalyzes the reversible phosphorylation of S-methyl-5'-thioadenosine (MTA) to adenine and 5-methylthioribose-1-phosphate. Involved in the breakdown of MTA, a major by-product of polyamine biosynthesis. Responsible for the first step in the methionine salvage pathway after MTA has been generated from S-adenosylmethionine. Has broad substrate specificity with 6-aminopurine nucleosides as preferred substrates. The protein is S-methyl-5'-thioadenosine phosphorylase of Drosophila pseudoobscura pseudoobscura (Fruit fly).